The chain runs to 186 residues: Elongation factor P (186 aa).

It belongs to the elongation factor P family.

The protein resides in the cytoplasm. The protein operates within protein biosynthesis; polypeptide chain elongation. Involved in peptide bond synthesis. Stimulates efficient translation and peptide-bond synthesis on native or reconstituted 70S ribosomes in vitro. Probably functions indirectly by altering the affinity of the ribosome for aminoacyl-tRNA, thus increasing their reactivity as acceptors for peptidyl transferase. The chain is Elongation factor P from Beutenbergia cavernae (strain ATCC BAA-8 / DSM 12333 / CCUG 43141 / JCM 11478 / NBRC 16432 / NCIMB 13614 / HKI 0122).